The sequence spans 382 residues: Bestrophin-6 (382 aa).

Helical transmembrane passes span 29-49 (WKLIHRELFMWLVLYYTVLAI), 68-88 (FINFEPSILTFMLSFFVTTIV), 231-251 (LAYPQVIFFAVRLYFVICAFA), and 265-285 (VIHYYFPIVTVFQFICLMGWL).

This sequence belongs to the anion channel-forming bestrophin (TC 1.A.46) family. Calcium-sensitive chloride channel subfamily.

The protein resides in the membrane. The chain is Bestrophin-6 (best-6) from Caenorhabditis elegans.